A 160-amino-acid chain; its full sequence is Transcription elongation factor GreA (160 aa).

The stretch at 49-75 (SEYDEAKNDQAFTEGKILQLENKLKNA) forms a coiled coil.

Belongs to the GreA/GreB family.

Its function is as follows. Necessary for efficient RNA polymerase transcription elongation past template-encoded arresting sites. The arresting sites in DNA have the property of trapping a certain fraction of elongating RNA polymerases that pass through, resulting in locked ternary complexes. Cleavage of the nascent transcript by cleavage factors such as GreA or GreB allows the resumption of elongation from the new 3'terminus. GreA releases sequences of 2 to 3 nucleotides. The chain is Transcription elongation factor GreA from Clostridium botulinum (strain Eklund 17B / Type B).